We begin with the raw amino-acid sequence, 662 residues long: Protein translocase subunit SecA 2 (662 aa).

ATP is bound by residues Gln-110, 128-132 (GEGKT), and Asp-538.

The protein belongs to the SecA family. Monomer and homodimer. Part of the essential Sec protein translocation apparatus which comprises SecA, SecYEG and auxiliary proteins SecDF. Other proteins may also be involved.

Its subcellular location is the cell inner membrane. The protein localises to the cytoplasm. The catalysed reaction is ATP + H2O + cellular proteinSide 1 = ADP + phosphate + cellular proteinSide 2.. Functionally, part of the Sec protein translocase complex. Interacts with the SecYEG preprotein conducting channel. Has a central role in coupling the hydrolysis of ATP to the transfer of proteins into and across the cell membrane, serving as an ATP-driven molecular motor driving the stepwise translocation of polypeptide chains across the membrane. This is Protein translocase subunit SecA 2 from Chlorobium chlorochromatii (strain CaD3).